A 266-amino-acid polypeptide reads, in one-letter code: Nickel import ATP-binding protein NikE (266 aa).

Residues 4–252 form the ABC transporter domain; sequence ISADNIVKIY…RHPASRLLRE (249 aa). Residue 45 to 52 participates in ATP binding; it reads GRSGCGKS.

This sequence belongs to the ABC transporter superfamily. Nickel importer (TC 3.A.1.5.3) family. The complex is composed of two ATP-binding proteins (NikD and NikE), two transmembrane proteins (NikB and NikC) and a solute-binding protein (NikA).

It is found in the cell inner membrane. It carries out the reaction Ni(2+)(out) + ATP + H2O = Ni(2+)(in) + ADP + phosphate + H(+). Its function is as follows. Part of the ABC transporter complex NikABCDE involved in nickel import. Responsible for energy coupling to the transport system. This chain is Nickel import ATP-binding protein NikE, found in Brucella abortus (strain 2308).